The primary structure comprises 565 residues: Ubiquitin carboxyl-terminal hydrolase 39 (565 aa).

Composition is skewed to basic and acidic residues over residues 1–21 (MSGR…ESES) and 28–39 (VKRERDREREPE). 2 disordered regions span residues 1–61 (MSGR…SARE) and 75–96 (EREV…GRVD). Ser46 carries the phosphoserine modification. Residue Lys51 forms a Glycyl lysine isopeptide (Lys-Gly) (interchain with G-Cter in SUMO2) linkage. Ser82 carries the phosphoserine modification. Over residues 85-96 (EREVRAKNGRVD) the composition is skewed to basic and acidic residues. The segment at 103-200 (RHCPYLDTIN…YVLKPTFTKQ (98 aa)) adopts a UBP-type; degenerate zinc-finger fold. 4 residues coordinate Zn(2+): Cys136, Cys139, His155, and His161. The region spanning 225-555 (VGLNNIKAND…EAYIQIWKRR (331 aa)) is the USP domain.

The protein belongs to the peptidase C19 family. The U4/U6-U5 tri-snRNP complex is a building block of the precatalytic spliceosome (spliceosome B complex). Component of the U4/U6-U5 tri-snRNP complex composed of the U4, U6 and U5 snRNAs and at least PRPF3, PRPF4, PRPF6, PRPF8, PRPF31, SNRNP200, TXNL4A, SNRNP40, SNRPB, SNRPD1, SNRPD2, SNRPD3, SNRPE, SNRPF, SNRPG, DDX23, CD2BP2, PPIH, SNU13, EFTUD2, SART1 and USP39, plus LSM2, LSM3, LSM4, LSM5, LSM6, LSM7 and LSM8.

It localises to the nucleus. The catalysed reaction is Thiol-dependent hydrolysis of ester, thioester, amide, peptide and isopeptide bonds formed by the C-terminal Gly of ubiquitin (a 76-residue protein attached to proteins as an intracellular targeting signal).. Its function is as follows. Deubiquitinating enzyme that plays a role in many cellular processes including cellular antiviral response, epithelial morphogenesis, DNA repair or B-cell development. Plays a role in pre-mRNA splicing as a component of the U4/U6-U5 tri-snRNP, one of the building blocks of the precatalytic spliceosome. Specifically regulates immunoglobulin gene rearrangement in a spliceosome-dependent manner, which involves modulating chromatin interactions at the Igh locus and therefore plays an essential role in B-cell development. Regulates AURKB mRNA levels, and thereby plays a role in cytokinesis and in the spindle checkpoint. Regulates apoptosis and G2/M cell cycle checkpoint in response to DNA damage by deubiquitinating and stabilizing CHK2. Also plays an important role in DNA repair by controlling the recruitment of XRCC4/LIG4 to DNA double-strand breaks for non-homologous end-joining repair. Participates in antiviral activity by affecting the type I IFN signaling by stabilizing STAT1 and decreasing its 'Lys-6'-linked ubiquitination. Contributes to non-canonical Wnt signaling during epidermal differentiation. Acts as a negative regulator NF-kappa-B activation through deubiquitination of 'Lys-48'-linked ubiquitination of NFKBIA. The chain is Ubiquitin carboxyl-terminal hydrolase 39 (USP39) from Pongo abelii (Sumatran orangutan).